The primary structure comprises 399 residues: Protochlorophyllide reductase, chloroplastic (399 aa).

The N-terminal 64 residues, 1–64, are a transit peptide targeting the chloroplast; sequence MALQTASMLP…RQKVGAVRAE (64 aa).

This sequence belongs to the short-chain dehydrogenases/reductases (SDR) family. POR subfamily.

It is found in the plastid. It localises to the chloroplast. The enzyme catalyses chlorophyllide a + NADP(+) = protochlorophyllide a + NADPH + H(+). The protein operates within porphyrin-containing compound metabolism; chlorophyll biosynthesis. In terms of biological role, phototransformation of protochlorophyllide (Pchlide) to chlorophyllide (Chlide). The chain is Protochlorophyllide reductase, chloroplastic (3PCR) from Pisum sativum (Garden pea).